The sequence spans 221 residues: Protein lethal(2)k10201 (221 aa).

C2H2-type zinc fingers lie at residues 74–97 (YSCVECRKMLPTAHLLDLHITEQH) and 113–138 (FSCFLEECTIKFHTARQRKDHCIITH). The tract at residues 146–168 (FDHSKNRGKQKHQGKSKPNSMEV) is disordered. Basic residues predominate over residues 151-160 (NRGKQKHQGK).

In terms of biological role, vital for development. This chain is Protein lethal(2)k10201 (l(2)k10201), found in Drosophila melanogaster (Fruit fly).